The sequence spans 351 residues: Protein-glutamate methylesterase/protein-glutamine glutaminase 2 (351 aa).

The Response regulatory domain maps to 4–121 (KVLVVDDSAL…PQDFNEYQDL (118 aa)). 4-aspartylphosphate is present on aspartate 55. Positions 156-348 (RVINTQLVAI…DKMLNYLASL (193 aa)) constitute a CheB-type methylesterase domain. Residues serine 168, histidine 194, and aspartate 290 contribute to the active site.

It belongs to the CheB family. In terms of processing, phosphorylated by CheA. Phosphorylation of the N-terminal regulatory domain activates the methylesterase activity.

It localises to the cytoplasm. It catalyses the reaction [protein]-L-glutamate 5-O-methyl ester + H2O = L-glutamyl-[protein] + methanol + H(+). The enzyme catalyses L-glutaminyl-[protein] + H2O = L-glutamyl-[protein] + NH4(+). Functionally, involved in chemotaxis. Part of a chemotaxis signal transduction system that modulates chemotaxis in response to various stimuli. Catalyzes the demethylation of specific methylglutamate residues introduced into the chemoreceptors (methyl-accepting chemotaxis proteins or MCP) by CheR. Also mediates the irreversible deamidation of specific glutamine residues to glutamic acid. This Shewanella sp. (strain MR-4) protein is Protein-glutamate methylesterase/protein-glutamine glutaminase 2.